The chain runs to 160 residues: S-ribosylhomocysteine lyase (160 aa).

Residues His57, His61, and Cys127 each contribute to the Fe cation site.

The protein belongs to the LuxS family. Homodimer. Fe cation serves as cofactor.

It carries out the reaction S-(5-deoxy-D-ribos-5-yl)-L-homocysteine = (S)-4,5-dihydroxypentane-2,3-dione + L-homocysteine. In terms of biological role, involved in the synthesis of autoinducer 2 (AI-2) which is secreted by bacteria and is used to communicate both the cell density and the metabolic potential of the environment. The regulation of gene expression in response to changes in cell density is called quorum sensing. Catalyzes the transformation of S-ribosylhomocysteine (RHC) to homocysteine (HC) and 4,5-dihydroxy-2,3-pentadione (DPD). The polypeptide is S-ribosylhomocysteine lyase (Streptococcus agalactiae serotype V (strain ATCC BAA-611 / 2603 V/R)).